The primary structure comprises 489 residues: MEKSWFNFMFSKGELEYRSGLNKAMDSFAPIEKTTIKKDRFIYDMDKNFYGWGERSSYYNNVDLLVSSKDIRNFISDDTFFVRDSNKNSYSIYFDIKKNKFEINNDLSDLEFFFYSYCSSSYLNNRSKSDNDLHYDPYVKNTKSNCNNHINSCIDSYFRSHICIDSYFLSDSTNSNESYIYNFICSESGKIRESKNYKIRTKTNRNRNNLMNSKDFDITKNYNQLWIQCDNCYGLMYKKVEMNVCEECGHYLKMTSSERIELLIDPGTWNPMDEDMVSADPIKFHSREEPYKNRIDSAQKKTGLTDAVQTGTGQLNGIPVALGVMDFQFMGGSMGSVVGEKITRLIEYATNQCLPLILVCSSGGARMQEGSLSLMQMAKISSVLCDYQSSKKLFYISILTSPTTGGVTASFGMLGDIIIAEPYAYIAFAGKRVIEQTLKKAVPEGSQAAESLLRKGLLDAIVPRNPLKGVVSELFQLHAFFPLNKTEIK.

Positions 225 to 489 constitute a CoA carboxyltransferase N-terminal domain; it reads LWIQCDNCYG…FFPLNKTEIK (265 aa). Zn(2+) is bound by residues cysteine 229, cysteine 232, cysteine 245, and cysteine 248. Residues 229–248 form a C4-type zinc finger; that stretch reads CDNCYGLMYKKVEMNVCEEC.

The protein belongs to the AccD/PCCB family. In terms of assembly, acetyl-CoA carboxylase is a heterohexamer composed of biotin carboxyl carrier protein, biotin carboxylase and 2 subunits each of ACCase subunit alpha and ACCase plastid-coded subunit beta (accD). It depends on Zn(2+) as a cofactor.

The protein localises to the plastid. The protein resides in the chloroplast stroma. The enzyme catalyses N(6)-carboxybiotinyl-L-lysyl-[protein] + acetyl-CoA = N(6)-biotinyl-L-lysyl-[protein] + malonyl-CoA. It functions in the pathway lipid metabolism; malonyl-CoA biosynthesis; malonyl-CoA from acetyl-CoA: step 1/1. In terms of biological role, component of the acetyl coenzyme A carboxylase (ACC) complex. Biotin carboxylase (BC) catalyzes the carboxylation of biotin on its carrier protein (BCCP) and then the CO(2) group is transferred by the transcarboxylase to acetyl-CoA to form malonyl-CoA. The protein is Acetyl-coenzyme A carboxylase carboxyl transferase subunit beta, chloroplastic of Draba nemorosa (Woodland whitlowgrass).